Consider the following 148-residue polypeptide: MAQLKFNSILVVCTGNICRSPIGERLLRKRLPGVKVKSAGVHGLVKHPADATAADVAANHGVSLEGHAGRKLTAEMARNYDLILAMESEHIAQVTAIAPEVRGKTMLFGQWLEQKEIPDPYRKSQDAFEHVYGMLERASQEWAKRLSR.

The active-site Nucleophile is the Cys13. Arg19 is a catalytic residue. Asp119 (proton donor) is an active-site residue.

It belongs to the low molecular weight phosphotyrosine protein phosphatase family.

It catalyses the reaction O-phospho-L-tyrosyl-[protein] + H2O = L-tyrosyl-[protein] + phosphate. Functionally, dephosphorylates etk. This is Low molecular weight protein-tyrosine-phosphatase Etp (etp) from Escherichia coli O157:H7.